The primary structure comprises 283 residues: uncharacterized protein (283 aa).

Positions M1 to A25 are cleaved as a signal peptide. C26 is lipidated: N-palmitoyl cysteine. Residue C26 is the site of S-diacylglycerol cysteine attachment.

This sequence belongs to the MG439/MG440 family.

It is found in the cell membrane. This is an uncharacterized protein from Mycoplasma pneumoniae (strain ATCC 29342 / M129 / Subtype 1) (Mycoplasmoides pneumoniae).